Reading from the N-terminus, the 332-residue chain is MSVKELLIQNVHKEEHSHAHNKITVVGVGAVGMACAISILMKDLADELALVDVIEDKLRGEMLDLQHGSLFLRTPKIVSGKDYSVTAHSKLVIITAGARQQEGESRLNLVQRNVNIFKFIIPNVVKYSPDCMLLVVSNPVDILTYVAWKISGFPKHRVIGSGCNLDSARFRYLMGEKLGIHSLSCHGWIIGEHGDSSVPVWSGVNVAGVSLKALYPDLGTDADKEHWKEVHKQVVDSAYEVIKLKGYTSWAIGLSVADLAETVMKNLRRVHPISTMVKGMYGVSSDVFLSVPCVLGYAGITDVVKMTLKSEEEEKLRKSADTLWGIQKELQF.

NAD(+) is bound by residues 29–57 (GAVGMACAISILMKDLADELALVDVIEDK) and arginine 99. Substrate contacts are provided by arginine 106, asparagine 138, and arginine 169. Residue asparagine 138 participates in NAD(+) binding. Catalysis depends on histidine 193, which acts as the Proton acceptor. A substrate-binding site is contributed by threonine 248.

It belongs to the LDH/MDH superfamily. LDH family. As to quaternary structure, homotetramer.

It is found in the cytoplasm. The enzyme catalyses (S)-lactate + NAD(+) = pyruvate + NADH + H(+). The protein operates within fermentation; pyruvate fermentation to lactate; (S)-lactate from pyruvate: step 1/1. Interconverts simultaneously and stereospecifically pyruvate and lactate with concomitant interconversion of NADH and NAD(+). The polypeptide is L-lactate dehydrogenase A chain (LDHA) (Pelodiscus sinensis japonicus (Chinese soft-shelled turtle)).